Reading from the N-terminus, the 126-residue chain is Iron-sulfur cluster insertion protein ErpA (126 aa).

Residues 1–21 (MNQPANQFNPSSSQPVDPTVL) form a disordered region. The iron-sulfur cluster site is built by C54, C118, and C120.

The protein belongs to the HesB/IscA family. Homodimer. The cofactor is iron-sulfur cluster.

Required for insertion of 4Fe-4S clusters for at least IspG. The protein is Iron-sulfur cluster insertion protein ErpA of Psychrobacter arcticus (strain DSM 17307 / VKM B-2377 / 273-4).